We begin with the raw amino-acid sequence, 556 residues long: Arginine--tRNA ligase (556 aa).

Residues 132–142 (ANPTGSLHLGH) carry the 'HIGH' region motif.

Belongs to the class-I aminoacyl-tRNA synthetase family. Monomer.

It is found in the cytoplasm. It carries out the reaction tRNA(Arg) + L-arginine + ATP = L-arginyl-tRNA(Arg) + AMP + diphosphate. The sequence is that of Arginine--tRNA ligase from Anoxybacillus flavithermus (strain DSM 21510 / WK1).